A 111-amino-acid chain; its full sequence is uncharacterized protein (111 aa).

2 helical membrane-spanning segments follow: residues 18 to 38 (LNVF…LFVS) and 42 to 62 (LALA…RTFP).

It is found in the membrane. This is an uncharacterized protein from Saccharomyces cerevisiae (strain ATCC 204508 / S288c) (Baker's yeast).